The following is a 496-amino-acid chain: Aldehyde dehydrogenase (496 aa).

Active-site residues include Glu-263 and Cys-296.

Belongs to the aldehyde dehydrogenase family.

Its subcellular location is the cytoplasm. The enzyme catalyses an aldehyde + NAD(+) + H2O = a carboxylate + NADH + 2 H(+). This chain is Aldehyde dehydrogenase (CLAH10), found in Davidiella tassiana (Mycosphaerella tassiana).